A 426-amino-acid chain; its full sequence is uncharacterized protein (426 aa).

His277 is a Zn(2+) binding site. Glu278 is an active-site residue. Zn(2+) is bound by residues His281 and Glu357.

This sequence belongs to the peptidase M48B family. The cofactor is Zn(2+).

This is an uncharacterized protein from Bacillus subtilis (strain 168).